A 332-amino-acid chain; its full sequence is L-lactate dehydrogenase A chain (332 aa).

Residues 29-57 (GMVG…MEDK) and R99 contribute to the NAD(+) site. Substrate-binding residues include R106, N138, and R169. N138 is an NAD(+) binding site. H193 functions as the Proton acceptor in the catalytic mechanism. T248 lines the substrate pocket.

This sequence belongs to the LDH/MDH superfamily. LDH family. In terms of assembly, homotetramer.

The protein resides in the cytoplasm. It carries out the reaction (S)-lactate + NAD(+) = pyruvate + NADH + H(+). The protein operates within fermentation; pyruvate fermentation to lactate; (S)-lactate from pyruvate: step 1/1. Interconverts simultaneously and stereospecifically pyruvate and lactate with concomitant interconversion of NADH and NAD(+). This Sphyraena lucasana (Lucas barracuda) protein is L-lactate dehydrogenase A chain (ldha).